Consider the following 89-residue polypeptide: UPF0335 protein Nham_1221 (89 aa).

Belongs to the UPF0335 family.

This is UPF0335 protein Nham_1221 from Nitrobacter hamburgensis (strain DSM 10229 / NCIMB 13809 / X14).